A 202-amino-acid polypeptide reads, in one-letter code: Cytochrome c oxidase assembly protein CtaG (202 aa).

Residues 1 to 14 are Cytoplasmic-facing; the sequence is MTSPANPSEVTRDR. The helical; Signal-anchor for type II membrane protein transmembrane segment at 15-37 threads the bilayer; it reads RNRGVAFVCAGVFVAMVGMSFAA. At 38-202 the chain is on the periplasmic side; that stretch reads VPLYRLFCQV…GAAKTQKLGG (165 aa).

The protein belongs to the COX11/CtaG family.

It localises to the cell inner membrane. Functionally, exerts its effect at some terminal stage of cytochrome c oxidase synthesis, probably by being involved in the insertion of the copper B into subunit I. This chain is Cytochrome c oxidase assembly protein CtaG, found in Chelativorans sp. (strain BNC1).